Here is a 247-residue protein sequence, read N- to C-terminus: tRNA (guanine-N(7)-)-methyltransferase (247 aa).

Residues G70, 93–94, 128–129, and L148 each bind S-adenosyl-L-methionine; these read EI and NA. The active site involves D151. Position 226-228 (226-228) interacts with S-adenosyl-L-methionine; sequence SEE.

Belongs to the class I-like SAM-binding methyltransferase superfamily. TrmB family.

It is found in the nucleus. The catalysed reaction is guanosine(46) in tRNA + S-adenosyl-L-methionine = N(7)-methylguanosine(46) in tRNA + S-adenosyl-L-homocysteine. It functions in the pathway tRNA modification; N(7)-methylguanine-tRNA biosynthesis. Catalyzes the formation of N(7)-methylguanine at position 46 (m7G46) in tRNA. In Drosophila persimilis (Fruit fly), this protein is tRNA (guanine-N(7)-)-methyltransferase.